A 437-amino-acid polypeptide reads, in one-letter code: Probable glycine dehydrogenase (decarboxylating) subunit 1 (437 aa).

This sequence belongs to the GcvP family. N-terminal subunit subfamily. As to quaternary structure, the glycine cleavage system is composed of four proteins: P, T, L and H. In this organism, the P 'protein' is a heterodimer of two subunits.

It catalyses the reaction N(6)-[(R)-lipoyl]-L-lysyl-[glycine-cleavage complex H protein] + glycine + H(+) = N(6)-[(R)-S(8)-aminomethyldihydrolipoyl]-L-lysyl-[glycine-cleavage complex H protein] + CO2. In terms of biological role, the glycine cleavage system catalyzes the degradation of glycine. The P protein binds the alpha-amino group of glycine through its pyridoxal phosphate cofactor; CO(2) is released and the remaining methylamine moiety is then transferred to the lipoamide cofactor of the H protein. This chain is Probable glycine dehydrogenase (decarboxylating) subunit 1, found in Thermotoga petrophila (strain ATCC BAA-488 / DSM 13995 / JCM 10881 / RKU-1).